Consider the following 459-residue polypeptide: Putrescine aminotransferase (459 aa).

Pyridoxal 5'-phosphate is bound by residues 150–151 (GT) and Gln-274. Lys-300 carries the post-translational modification N6-(pyridoxal phosphate)lysine. Thr-332 lines the pyridoxal 5'-phosphate pocket.

It belongs to the class-III pyridoxal-phosphate-dependent aminotransferase family. Putrescine aminotransferase subfamily. It depends on pyridoxal 5'-phosphate as a cofactor.

It carries out the reaction an alkane-alpha,omega-diamine + 2-oxoglutarate = an omega-aminoaldehyde + L-glutamate. The catalysed reaction is putrescine + 2-oxoglutarate = 1-pyrroline + L-glutamate + H2O. The enzyme catalyses cadaverine + 2-oxoglutarate = 5-aminopentanal + L-glutamate. The protein operates within amine and polyamine degradation; putrescine degradation; 4-aminobutanal from putrescine (transaminase route): step 1/1. Catalyzes the aminotransferase reaction from putrescine to 2-oxoglutarate, leading to glutamate and 4-aminobutanal, which spontaneously cyclizes to form 1-pyrroline. This is the first step in one of two pathways for putrescine degradation, where putrescine is converted into 4-aminobutanoate (gamma-aminobutyrate or GABA) via 4-aminobutanal. Also functions as a cadaverine transaminase in a a L-lysine degradation pathway to succinate that proceeds via cadaverine, glutarate and L-2-hydroxyglutarate. This chain is Putrescine aminotransferase, found in Escherichia coli O9:H4 (strain HS).